The following is a 99-amino-acid chain: Beta-2-microglobulin (99 aa).

The Ig-like C1-type domain maps to 5 to 92; it reads PNVQVYSRHP…KHVTLKEPMT (88 aa). C25 and C80 form a disulfide bridge.

The protein belongs to the beta-2-microglobulin family. In terms of assembly, heterodimer of an alpha chain and a beta chain. Beta-2-microglobulin is the beta-chain of major histocompatibility complex class I molecules.

Its subcellular location is the secreted. Its function is as follows. Component of the class I major histocompatibility complex (MHC). Involved in the presentation of peptide antigens to the immune system. The chain is Beta-2-microglobulin (B2M) from Oryctolagus cuniculus (Rabbit).